The primary structure comprises 239 residues: Ribosomal RNA small subunit methyltransferase G (239 aa).

S-adenosyl-L-methionine contacts are provided by residues G79, F84, 130–131, and R149; that span reads AE.

The protein belongs to the methyltransferase superfamily. RNA methyltransferase RsmG family.

It is found in the cytoplasm. In terms of biological role, specifically methylates the N7 position of a guanine in 16S rRNA. The sequence is that of Ribosomal RNA small subunit methyltransferase G from Lactobacillus delbrueckii subsp. bulgaricus (strain ATCC 11842 / DSM 20081 / BCRC 10696 / JCM 1002 / NBRC 13953 / NCIMB 11778 / NCTC 12712 / WDCM 00102 / Lb 14).